A 311-amino-acid chain; its full sequence is Dehydrogenase/reductase SDR family member 7C (311 aa).

The first 18 residues, 1 to 18 (MGVTAVLMLPLLLLGISG), serve as a signal peptide directing secretion. 5 residues coordinate NAD(+): Ser47, Leu49, Tyr191, Lys195, and Ser226. The active-site Proton acceptor is the Tyr191.

The protein belongs to the short-chain dehydrogenases/reductases (SDR) family.

Its subcellular location is the sarcoplasmic reticulum membrane. It carries out the reaction all-trans-retinol + NAD(+) = all-trans-retinal + NADH + H(+). Its function is as follows. NADH-dependent oxidoreductase which catalyzes the oxidation of all-trans-retinol to all-trans-retinal. Plays a role in the regulation of cardiac and skeletal muscle metabolic functions. Maintains Ca(2+) intracellular homeostasis by repressing Ca(2+) release from the sarcoplasmic reticulum (SR) in myotubes, possibly through local alternations in NAD/NADH or retinol/retinal. Also plays a role in Ca(2+) homeostasis by controlling Ca(2+) overload in the cytosol and the SR in myotubes. Involved in glucose uptake into skeletal muscles and muscle performance by activating PI3K and mTORC2-mediated AKT1 phosphorylation signaling pathways, possibly through the action of its downstream catalytic product all-trans-retinoic acid. The chain is Dehydrogenase/reductase SDR family member 7C (DHRS7C) from Bos taurus (Bovine).